The primary structure comprises 468 residues: 6-phospho-beta-galactosidase (468 aa).

Glutamine 19, histidine 116, asparagine 159, glutamate 160, and asparagine 297 together coordinate D-galactose 6-phosphate. Glutamate 160 (proton donor) is an active-site residue. Glutamate 375 acts as the Nucleophile in catalysis. Serine 428, tryptophan 429, lysine 435, and tyrosine 437 together coordinate D-galactose 6-phosphate.

Belongs to the glycosyl hydrolase 1 family.

The enzyme catalyses a 6-phospho-beta-D-galactoside + H2O = D-galactose 6-phosphate + an alcohol. It functions in the pathway carbohydrate metabolism; lactose degradation; D-galactose 6-phosphate and beta-D-glucose from lactose 6-phosphate: step 1/1. This chain is 6-phospho-beta-galactosidase, found in Streptococcus pyogenes serotype M28 (strain MGAS6180).